A 430-amino-acid polypeptide reads, in one-letter code: Enolase (430 aa).

Gln163 is a (2R)-2-phosphoglycerate binding site. The Proton donor role is filled by Glu205. Mg(2+)-binding residues include Asp242, Glu287, and Asp314. Residues Lys339, Arg368, Ser369, and Lys390 each coordinate (2R)-2-phosphoglycerate. The Proton acceptor role is filled by Lys339.

Belongs to the enolase family. Requires Mg(2+) as cofactor.

The protein resides in the cytoplasm. It is found in the secreted. It localises to the cell surface. The enzyme catalyses (2R)-2-phosphoglycerate = phosphoenolpyruvate + H2O. Its pathway is carbohydrate degradation; glycolysis; pyruvate from D-glyceraldehyde 3-phosphate: step 4/5. Its function is as follows. Catalyzes the reversible conversion of 2-phosphoglycerate (2-PG) into phosphoenolpyruvate (PEP). It is essential for the degradation of carbohydrates via glycolysis. In Bacillus pumilus (strain SAFR-032), this protein is Enolase.